Here is a 1045-residue protein sequence, read N- to C-terminus: Isoleucine--tRNA ligase (1045 aa).

A 'HIGH' region motif is present at residues 49-59; sequence PYCSGRIHLGT. Residues 591 to 595 carry the 'KMSKS' region motif; the sequence is KMSKS. ATP is bound at residue Lys-594.

It belongs to the class-I aminoacyl-tRNA synthetase family. IleS type 2 subfamily. As to quaternary structure, monomer. Zn(2+) serves as cofactor.

The protein resides in the cytoplasm. The enzyme catalyses tRNA(Ile) + L-isoleucine + ATP = L-isoleucyl-tRNA(Ile) + AMP + diphosphate. Functionally, catalyzes the attachment of isoleucine to tRNA(Ile). As IleRS can inadvertently accommodate and process structurally similar amino acids such as valine, to avoid such errors it has two additional distinct tRNA(Ile)-dependent editing activities. One activity is designated as 'pretransfer' editing and involves the hydrolysis of activated Val-AMP. The other activity is designated 'posttransfer' editing and involves deacylation of mischarged Val-tRNA(Ile). This chain is Isoleucine--tRNA ligase, found in Methanothermobacter marburgensis (strain ATCC BAA-927 / DSM 2133 / JCM 14651 / NBRC 100331 / OCM 82 / Marburg) (Methanobacterium thermoautotrophicum).